The following is a 192-amino-acid chain: NADH-quinone oxidoreductase subunit B (192 aa).

[4Fe-4S] cluster contacts are provided by Cys71, Cys72, Cys136, and Cys166.

Belongs to the complex I 20 kDa subunit family. In terms of assembly, NDH-1 is composed of 14 different subunits. Subunits NuoB, C, D, E, F, and G constitute the peripheral sector of the complex. It depends on [4Fe-4S] cluster as a cofactor.

The protein resides in the cell inner membrane. The enzyme catalyses a quinone + NADH + 5 H(+)(in) = a quinol + NAD(+) + 4 H(+)(out). Functionally, NDH-1 shuttles electrons from NADH, via FMN and iron-sulfur (Fe-S) centers, to quinones in the respiratory chain. Couples the redox reaction to proton translocation (for every two electrons transferred, four hydrogen ions are translocated across the cytoplasmic membrane), and thus conserves the redox energy in a proton gradient. This chain is NADH-quinone oxidoreductase subunit B, found in Azorhizobium caulinodans (strain ATCC 43989 / DSM 5975 / JCM 20966 / LMG 6465 / NBRC 14845 / NCIMB 13405 / ORS 571).